We begin with the raw amino-acid sequence, 219 residues long: UPF0502 protein Ppro_2903 (219 aa).

The protein belongs to the UPF0502 family.

This Pelobacter propionicus (strain DSM 2379 / NBRC 103807 / OttBd1) protein is UPF0502 protein Ppro_2903.